Here is a 1085-residue protein sequence, read N- to C-terminus: Phosphorylase b kinase regulatory subunit beta (1085 aa).

A phosphoserine mark is found at Ser10, Ser19, and Ser693. 2 calmodulin-binding regions span residues 760 to 787 (RVYRRAGSKKLWSVVRRAASLLNKVVDS) and 912 to 943 (SGRCWLNRRQIDGSLNRTPPEFYDRVWQILER). A lipid anchor (S-farnesyl cysteine) is attached at Cys1082.

Belongs to the phosphorylase b kinase regulatory chain family. In terms of assembly, hexadecamer of 4 heterotetramers, each composed of alpha, beta, gamma, and delta subunits. Alpha (PHKA1 or PHKA2) and beta (PHKB) are regulatory subunits, gamma (PHKG1 or PHKG2) is the catalytic subunit, and delta is calmodulin. Although the final Cys may be farnesylated, the terminal tripeptide is probably not removed, and the C-terminus is not methylated.

The protein localises to the cell membrane. The protein operates within glycan biosynthesis; glycogen metabolism. With respect to regulation, by phosphorylation of various serine residues. Phosphorylase b kinase catalyzes the phosphorylation of serine in certain substrates, including troponin I. The beta chain acts as a regulatory unit and modulates the activity of the holoenzyme in response to phosphorylation. The chain is Phosphorylase b kinase regulatory subunit beta (Phkb) from Mus musculus (Mouse).